A 214-amino-acid polypeptide reads, in one-letter code: Large ribosomal subunit protein uL1 (214 aa).

This sequence belongs to the universal ribosomal protein uL1 family. As to quaternary structure, part of the 50S ribosomal subunit.

In terms of biological role, binds directly to 23S rRNA. Probably involved in E site tRNA release. Its function is as follows. Protein L1 is also a translational repressor protein, it controls the translation of its operon by binding to its mRNA. This chain is Large ribosomal subunit protein uL1, found in Methanoregula boonei (strain DSM 21154 / JCM 14090 / 6A8).